We begin with the raw amino-acid sequence, 424 residues long: 3-phosphoshikimate 1-carboxyvinyltransferase (424 aa).

Positions 21, 22, and 26 each coordinate 3-phosphoshikimate. Residue Lys21 participates in phosphoenolpyruvate binding. Gly91 and Arg119 together coordinate phosphoenolpyruvate. Ser164, Gln166, Asp310, and Lys337 together coordinate 3-phosphoshikimate. Gln166 lines the phosphoenolpyruvate pocket. Catalysis depends on Asp310, which acts as the Proton acceptor. The phosphoenolpyruvate site is built by Arg341 and Arg382.

Belongs to the EPSP synthase family. Monomer.

The protein resides in the cytoplasm. The enzyme catalyses 3-phosphoshikimate + phosphoenolpyruvate = 5-O-(1-carboxyvinyl)-3-phosphoshikimate + phosphate. It participates in metabolic intermediate biosynthesis; chorismate biosynthesis; chorismate from D-erythrose 4-phosphate and phosphoenolpyruvate: step 6/7. Its function is as follows. Catalyzes the transfer of the enolpyruvyl moiety of phosphoenolpyruvate (PEP) to the 5-hydroxyl of shikimate-3-phosphate (S3P) to produce enolpyruvyl shikimate-3-phosphate and inorganic phosphate. In Campylobacter hominis (strain ATCC BAA-381 / DSM 21671 / CCUG 45161 / LMG 19568 / NCTC 13146 / CH001A), this protein is 3-phosphoshikimate 1-carboxyvinyltransferase.